The primary structure comprises 133 residues: Putative biopolymer transport protein ExbD-like 1 (133 aa).

Over Met-1–Asn-15 the chain is Cytoplasmic. Residues Ile-16–Val-32 form a helical membrane-spanning segment. Residues Thr-33–Pro-133 are Periplasmic-facing.

It belongs to the ExbD/TolR family.

The protein resides in the cell inner membrane. This is Putative biopolymer transport protein ExbD-like 1 from Helicobacter pylori (strain ATCC 700392 / 26695) (Campylobacter pylori).